Consider the following 304-residue polypeptide: Putative S-adenosyl-L-methionine-dependent methyltransferase YktD (304 aa).

Residues aspartate 134 and 163-164 (DF) each bind S-adenosyl-L-methionine.

The protein belongs to the UPF0677 family.

Its function is as follows. May be involved in polyketide synthesis. The polypeptide is Putative S-adenosyl-L-methionine-dependent methyltransferase YktD (yktD) (Bacillus subtilis (strain 168)).